The following is a 373-amino-acid chain: MTIPELPKDLIEEILCYVPATYLKRLRSTCKGWNRLFKDDRRFAKKHYDKAAKQFLPLMSTNEELCAMSVNLHGTIPSLEVKDKPWLFVSDSKHCDIEISRIFHSGGLLLCFSRDGEISIIVWNPLTSETRLIRTRNRRDKGRNFVLGYYQEDKKTYYKILSFYLDSKDFEIFEFNSDSWRFIDDICPGLSLLYSDQCVSLKGNTYMFAIDDLSVSLLKYDFSTETSVPVPLPYKSRSFEAISLSVVREEKLSVLLQRDKSSKTEIWVTNVIDETTTKVMVVSWSKVLSLDLSPDLKIRYGESFLLDEEKKVIMIFNNRMEEENKSEDKLYIIGDDDNKATQVYTIHGYGPAVFNYFPSLVQIEQSSRQEEKS.

Residues 1–46 (MTIPELPKDLIEEILCYVPATYLKRLRSTCKGWNRLFKDDRRFAKK) form the F-box domain. Kelch repeat units lie at residues 101-148 (RIFH…FVLG), 149-200 (YYQE…QCVS), and 329-373 (KLYI…EEKS).

The sequence is that of Putative F-box/kelch-repeat protein At3g19410 from Arabidopsis thaliana (Mouse-ear cress).